Reading from the N-terminus, the 491-residue chain is Neuronal acetylcholine receptor subunit beta-2 (491 aa).

The first 18 residues, 1–18, serve as a signal peptide directing secretion; the sequence is MALLRVLCLLAALRRSLC. The Extracellular portion of the chain corresponds to 19–226; the sequence is TDTEERLVEY…ITYDFIIRRK (208 aa). Residues Asn44 and Asn161 are each glycosylated (N-linked (GlcNAc...) asparagine). The cysteines at positions 148 and 162 are disulfide-linked. Residues 227–251 form a helical membrane-spanning segment; that stretch reads PLFYTINLIIPCILITSLAILVFYL. The Cytoplasmic portion of the chain corresponds to 252-258; that stretch reads PSDCGEK. The chain crosses the membrane as a helical span at residues 259-277; it reads MTLCISVLLALTVFLLLIS. Over 278-292 the chain is Extracellular; it reads KIVPPTSLDVPLVGK. A helical membrane pass occupies residues 293–314; sequence YLMFTMVLVTFSIVTSVCVLNV. The Cytoplasmic segment spans residues 315–449; it reads HHRSPTTHTM…WKYVAMVIDR (135 aa). A helical membrane pass occupies residues 450–468; it reads LFLWIFVFVCVFGTVGMFL.

It belongs to the ligand-gated ion channel (TC 1.A.9) family. Acetylcholine receptor (TC 1.A.9.1) subfamily. Beta-2/CHRNB2 sub-subfamily. Neuronal AChR is a heteropentamer composed of two different types of subunits: alpha and beta. CHRNB2/Beta-2 subunit can be combined to CHRNA2/alpha-2, CHRNA3/alpha-3 or CHRNA4/alpha-4, CHRNA5/alpha-5, CHRNA6/alpha-6 and CHRNB3/beta-3 to give rise to functional receptors.

The protein localises to the synaptic cell membrane. It localises to the cell membrane. It carries out the reaction Ca(2+)(in) = Ca(2+)(out). The catalysed reaction is K(+)(in) = K(+)(out). It catalyses the reaction Na(+)(in) = Na(+)(out). Activated by a myriad of ligands such as acetylcholine, cytisine, nicotine, choline and epibatidine. nAChR activity is inhibited by the antagonist alpha-conotoxins BuIA, PnIA, PnIC, GID and MII, small disulfide-constrained peptides from cone snails. Functionally, component of neuronal acetylcholine receptors (nAChRs) that function as pentameric, ligand-gated cation channels with high calcium permeability among other activities. nAChRs are excitatory neurotrasnmitter receptors formed by a collection of nAChR subunits known to mediate synaptic transmission in the nervous system and the neuromuscular junction. Each nAchR subunit confers differential attributes to channel properties, including activation, deactivation and desensitization kinetics, pH sensitivity, cation permeability, and binding to allosteric modulators. CHRNB2 forms heteropentameric neuronal acetylcholine receptors with CHRNA2, CHRNA3, CHRNA4 and CHRNA6, as well as CHRNA5 and CHRNB3 as accesory subunits. This chain is Neuronal acetylcholine receptor subunit beta-2 (CHRNB2), found in Gallus gallus (Chicken).